Here is an 819-residue protein sequence, read N- to C-terminus: MSGTSKESLGHGGLPGLGKACLTTMDKKLNMLNEKVDQLLHFQEDVTEKLQSMCRDMGHLERGLHRLEASRAPGPGGTDGVLRVDTQAGWPEVLELVRAMQQDAAQHGARLEALFRMVAAVDRAIALVGATFQKSKVADFLMQGRVPWRRGSPGDSPEENKERVEEEGAKPKHVLSASGVQSDAREPGEESQKADVLEGTVERLPPIRASGLGADPAQAVVSPGQGDGVPGPAQAFPGHLPLPTKGEAKAPETPSENLRTGLELAPAPGRVSVVSPSLEVAPGAGQGASSSRPDPEPLEEGTRLTPGPGPQCPGPPGLPAQARAAHSGGETPPRISIHIQEMGTPGEMLVTGRGSLGPTLTTDAPAAAQPGKQGPPGTGRCHQAPGTEPGEQTPEGARELSLLQESSSPGGVKAEEEQRAGAEPGTRPSLARSDDNDHKVGALGLQQGKSPGVGNPEPEQDCAARAPVRAEAVRRTPPGAEAGSMVLDDSPAPPAPFEHRLVSVKETSISAGYEVCQHEVLGGGRFGQVHRCTEKSTGLPLAAKIIKVKSAKDREDVKNEINIMNQLSHVNLIQLYDAFESKHSCTLVMEYVDGGELFDRITDEKYHLTELDVVLFTRQICEGVHYLHQHYILHLDLKPENILCVNQTGHQIKIIDFGLARRYKPREKLKVNFGTPEFLAPEVVNYEFVSFPTDMWSVGVITYMLLSGLSPFLGETDAETMNFIVNCSWDFDADTFEGLSEEAKDFVSRLLVKEESCRMSATQCLKHEWLNNLPAKALRSKTRLKSQLLLQKYIAQRKWKKHFYVVTAANRLRKFPTCP.

Positions 146 to 460 are disordered; that stretch reads VPWRRGSPGD…PGVGNPEPEQ (315 aa). Residue Ser-152 is modified to Phosphoserine. Basic and acidic residues-rich tracts occupy residues 158 to 170 and 183 to 196; these read EENK…EGAK and DARE…KADV. The span at 307–318 shows a compositional bias: pro residues; the sequence is GPGPQCPGPPGL. Ser-355, Ser-401, and Ser-408 each carry phosphoserine. The region spanning 515–770 is the Protein kinase domain; it reads VCQHEVLGGG…ATQCLKHEWL (256 aa). Residues 521–529 and Lys-544 contribute to the ATP site; that span reads LGGGRFGQV. The active-site Proton acceptor is the Asp-636.

Belongs to the protein kinase superfamily. CAMK Ser/Thr protein kinase family. Requires Mg(2+) as cofactor. Post-translationally, phosphorylated on serine residues.

It is found in the cytoplasm. The enzyme catalyses L-seryl-[myosin light chain] + ATP = O-phospho-L-seryl-[myosin light chain] + ADP + H(+). The catalysed reaction is L-threonyl-[myosin light chain] + ATP = O-phospho-L-threonyl-[myosin light chain] + ADP + H(+). Functionally, kinase that phosphorylates MYL2 in vitro. Promotes sarcomere formation in cardiomyocytes and increases cardiomyocyte contractility. The protein is Myosin light chain kinase 3 (MYLK3) of Pongo abelii (Sumatran orangutan).